The following is a 236-amino-acid chain: Large ribosomal subunit protein uL3 (236 aa).

The disordered stretch occupies residues 139-163 (ARDSSTTHEHHRHVGAIGQRKTPGK).

It belongs to the universal ribosomal protein uL3 family. Part of the 50S ribosomal subunit. Forms a cluster with proteins L14 and L19.

Functionally, one of the primary rRNA binding proteins, it binds directly near the 3'-end of the 23S rRNA, where it nucleates assembly of the 50S subunit. This Anaeromyxobacter sp. (strain Fw109-5) protein is Large ribosomal subunit protein uL3.